The sequence spans 753 residues: Dolichyl-phosphate-mannose--protein mannosyltransferase 3 (753 aa).

Residues 1-50 (MPYRVATGYSEKSTDDDLIWRTPIVKEELEDADNFLKDDAELYDKVKNES) lie on the Cytoplasmic side of the membrane. A helical transmembrane segment spans residues 51–71 (AVSHLDTIVMPIIFTVLGMFT). Residues 72–148 (RMYKIGRNNH…IDYVKMRLFQ (77 aa)) are Lumenal-facing. An N-linked (GlcNAc...) asparagine glycan is attached at N124. A helical membrane pass occupies residues 149 to 169 (AMFSSLCVPLAYFTGRAIGFS). The Cytoplasmic segment spans residues 170–174 (RLSVW). Residues 175-195 (LFTILVIFENSYATLGKFILL) form a helical membrane-spanning segment. At 196–235 (DSMLLFFTVSSYFCLAKFHTMRKSPFSARWWLWLCLTGLN) the chain is on the lumenal side. A helical transmembrane segment spans residues 236–256 (LGCAISVKMVGLFIISVVGIY). Residues 257 to 282 (TISELWNLLSDRSVSWKVYVNHWLAR) are Cytoplasmic-facing. The helical transmembrane segment at 283–303 (IFGLIIIPVCVFLLCFKIHFD) threads the bilayer. Over 304–602 (LLSNSGPGDS…IKYFLLGSPA (299 aa)) the chain is Lumenal. N324 carries an N-linked (GlcNAc...) asparagine glycan. Residues 332 to 387 (PRDVALGSSIISIKNQALGGALLHSHVQPFPEGSEQQQVTVYGYSDANNEWFFQRI) form the MIR 1 domain. N-linked (GlcNAc...) asparagine glycosylation occurs at N398. MIR domains lie at 401–457 (IEFV…IEIV) and 465–523 (PTLL…IETH). A helical transmembrane segment spans residues 603–623 (SVWPSSIAVCALIIHVIFLTL). The Cytoplasmic segment spans residues 624 to 639 (KWQRQCVILSDPVERD). A helical transmembrane segment spans residues 640–660 (VFVMAAFYPLLAWLLHYMPFV). Topologically, residues 661 to 665 (VMSRV) are lumenal. A helical membrane pass occupies residues 666-686 (VYAHHYLPTLYFALMILSYYF). At 687 to 703 (DMITKRWATRNTGKFLR) the chain is on the cytoplasmic side. Residues 704-724 (LGAYIVYGSIVIAGFFYFSPF) form a helical membrane-spanning segment. Residues 725–753 (SFGMDGPVDDYAYLAWLPTWQIVEDIRNT) lie on the Lumenal side of the membrane.

This sequence belongs to the glycosyltransferase 39 family. PMT3 and PMT5 form a functional heterodimer. Also forms a minor complex with PMT1.

The protein resides in the endoplasmic reticulum membrane. The catalysed reaction is a di-trans,poly-cis-dolichyl beta-D-mannosyl phosphate + L-seryl-[protein] = 3-O-(alpha-D-mannosyl)-L-seryl-[protein] + a di-trans,poly-cis-dolichyl phosphate + H(+). It catalyses the reaction a di-trans,poly-cis-dolichyl beta-D-mannosyl phosphate + L-threonyl-[protein] = 3-O-(alpha-D-mannosyl)-L-threonyl-[protein] + a di-trans,poly-cis-dolichyl phosphate + H(+). It participates in protein modification; protein glycosylation. In terms of biological role, protein O-mannosyltransferase involved in O-glycosylation which is essential for cell wall rigidity. Forms a heterodimeric complex with PMT5 and more rarely with PMT1 to transfer mannose from Dol-P-mannose to Ser or Thr residues on proteins. Seems to have redundant activity to PMT2. This Saccharomyces cerevisiae (strain ATCC 204508 / S288c) (Baker's yeast) protein is Dolichyl-phosphate-mannose--protein mannosyltransferase 3.